The chain runs to 261 residues: uncharacterized protein (261 aa).

One can recognise an N-acetyltransferase domain in the interval 135–261 (LVLKRIDEDI…VTEYTIYYSG (127 aa)).

The protein belongs to the acetyltransferase family.

This is an uncharacterized protein from Bacillus subtilis (strain 168).